Here is a 475-residue protein sequence, read N- to C-terminus: Protein trichome birefringence-like 6 (475 aa).

Residues 14 to 34 form a helical; Signal-anchor for type II membrane protein membrane-spanning segment; it reads VLAFIITIISSAIVFFTFFSS. The GDS motif motif lies at 211-213; it reads GDS. The DCXHWCLPGXXDXWN motif motif lies at 450 to 464; sequence DCSHWCLPGVPDTWN.

The protein belongs to the PC-esterase family. TBL subfamily.

It localises to the membrane. In terms of biological role, may act as a bridging protein that binds pectin and other cell wall polysaccharides. Probably involved in maintaining esterification of pectins. May be involved in the specific O-acetylation of cell wall polymers. The polypeptide is Protein trichome birefringence-like 6 (TBL6) (Arabidopsis thaliana (Mouse-ear cress)).